The chain runs to 353 residues: Probable dual-specificity RNA methyltransferase RlmN (353 aa).

The Proton acceptor role is filled by glutamate 104. One can recognise a Radical SAM core domain in the interval aspartate 112–aspartate 341. An intrachain disulfide couples cysteine 119 to cysteine 346. Residues cysteine 126, cysteine 130, and cysteine 133 each coordinate [4Fe-4S] cluster. S-adenosyl-L-methionine is bound by residues glycine 173–glutamate 174, serine 205, serine 228–asparagine 230, and asparagine 304. Residue cysteine 346 is the S-methylcysteine intermediate of the active site.

Belongs to the radical SAM superfamily. RlmN family. [4Fe-4S] cluster serves as cofactor.

Its subcellular location is the cytoplasm. The enzyme catalyses adenosine(2503) in 23S rRNA + 2 reduced [2Fe-2S]-[ferredoxin] + 2 S-adenosyl-L-methionine = 2-methyladenosine(2503) in 23S rRNA + 5'-deoxyadenosine + L-methionine + 2 oxidized [2Fe-2S]-[ferredoxin] + S-adenosyl-L-homocysteine. The catalysed reaction is adenosine(37) in tRNA + 2 reduced [2Fe-2S]-[ferredoxin] + 2 S-adenosyl-L-methionine = 2-methyladenosine(37) in tRNA + 5'-deoxyadenosine + L-methionine + 2 oxidized [2Fe-2S]-[ferredoxin] + S-adenosyl-L-homocysteine. In terms of biological role, specifically methylates position 2 of adenine 2503 in 23S rRNA and position 2 of adenine 37 in tRNAs. The polypeptide is Probable dual-specificity RNA methyltransferase RlmN (Leptospira interrogans serogroup Icterohaemorrhagiae serovar Lai (strain 56601)).